We begin with the raw amino-acid sequence, 360 residues long: Ubiquitin carboxyl-terminal hydrolase MIY1 (360 aa).

Cysteine 28 (nucleophile) is an active-site residue. Histidine 216 (proton acceptor) is an active-site residue. The disordered stretch occupies residues 317-360 (KRKIHSHKKNSEIHAPVKKDKFKRRSSLLNAKASEKEKSECVVM). 2 stretches are compositionally biased toward basic and acidic residues: residues 325-335 (KNSEIHAPVKK) and 349-360 (ASEKEKSECVVM).

This sequence belongs to the MINDY deubiquitinase family. FAM63 subfamily.

Its subcellular location is the cytoplasm. The enzyme catalyses Thiol-dependent hydrolysis of ester, thioester, amide, peptide and isopeptide bonds formed by the C-terminal Gly of ubiquitin (a 76-residue protein attached to proteins as an intracellular targeting signal).. Functionally, hydrolase that can specifically remove 'Lys-48'-linked conjugated ubiquitin from proteins. Has endodeubiquitinase activity. The sequence is that of Ubiquitin carboxyl-terminal hydrolase MIY1 from Saccharomyces cerevisiae (strain ATCC 204508 / S288c) (Baker's yeast).